Consider the following 162-residue polypeptide: uncharacterized protein (162 aa).

Residues 1–23 (MAQLPLSPAPQRPETKTPGKPEA) form a disordered region. The segment covering 13-23 (PETKTPGKPEA) has biased composition (basic and acidic residues).

This is an uncharacterized protein from Rhodobacter capsulatus (Rhodopseudomonas capsulata).